Reading from the N-terminus, the 249-residue chain is 3-deoxy-D-manno-octulosonic acid kinase (249 aa).

D175 is an active-site residue.

It belongs to the protein kinase superfamily. KdkA/RfaP family.

It localises to the cell inner membrane. The enzyme catalyses an alpha-Kdo-(2-&gt;6)-lipid IVA + ATP = a 4-O-phospho-alpha-Kdo-(2-&gt;6)-lipid IVA + ADP + H(+). Its pathway is bacterial outer membrane biogenesis; LPS core biosynthesis. Catalyzes the ATP-dependent phosphorylation of the 3-deoxy-D-manno-octulosonic acid (Kdo) residue in Kdo-lipid IV(A) at the 4-OH position. This is 3-deoxy-D-manno-octulosonic acid kinase from Xanthomonas axonopodis pv. citri (strain 306).